We begin with the raw amino-acid sequence, 204 residues long: Ciliary microtubule inner protein 7 (204 aa).

It localises to the cell projection. Its subcellular location is the cilium. The protein is Ciliary microtubule inner protein 7 of Homo sapiens (Human).